The chain runs to 1586 residues: Pentafunctional AROM polypeptide (1586 aa).

Positions 1 to 384 (MSEPTKISIL…HEPKASVVSN (384 aa)) are 3-dehydroquinate synthase. Residues 44–46 (DTN), 81–84 (ESSK), 114–116 (GGV), and D119 each bind NAD(+). R130 serves as a coordination point for 7-phospho-2-dehydro-3-deoxy-D-arabino-heptonate. 139 to 140 (TT) provides a ligand contact to NAD(+). Positions 146 and 152 each coordinate 7-phospho-2-dehydro-3-deoxy-D-arabino-heptonate. K161 is an NAD(+) binding site. Residue N162 participates in 7-phospho-2-dehydro-3-deoxy-D-arabino-heptonate binding. Residues 179-182 (FLET) and N190 each bind NAD(+). E194 provides a ligand contact to Zn(2+). Residues 194–197 (EVIK) and K250 each bind 7-phospho-2-dehydro-3-deoxy-D-arabino-heptonate. The active-site Proton acceptor; for 3-dehydroquinate synthase activity is the E260. 7-phospho-2-dehydro-3-deoxy-D-arabino-heptonate contacts are provided by residues 264–268 (RNLLN) and H271. H271 provides a ligand contact to Zn(2+). Residue H275 is the Proton acceptor; for 3-dehydroquinate synthase activity of the active site. 7-phospho-2-dehydro-3-deoxy-D-arabino-heptonate-binding residues include H287 and K356. H287 is a binding site for Zn(2+). Residues 397-842 (VHPGVPKSLN…WDALKQMFSV (446 aa)) form an EPSP synthase region. Residue C824 is the For EPSP synthase activity of the active site. The tract at residues 864–1056 (SASVFIIGMR…KKKKHSFFVS (193 aa)) is shikimate kinase. Residue 871 to 878 (GMRGAGKT) participates in ATP binding. The segment at 1057–1277 (LTLPDVEPSG…AAPGQLSAAE (221 aa)) is 3-dehydroquinase. H1180 acts as the Proton acceptor; for 3-dehydroquinate dehydratase activity in catalysis. K1208 acts as the Schiff-base intermediate with substrate; for 3-dehydroquinate dehydratase activity in catalysis. Residues 1290-1586 (AQKFAIFGSP…SKHLDYFLSF (297 aa)) are shikimate dehydrogenase.

It in the N-terminal section; belongs to the sugar phosphate cyclases superfamily. Dehydroquinate synthase family. In the 2nd section; belongs to the EPSP synthase family. This sequence in the 3rd section; belongs to the shikimate kinase family. The protein in the 4th section; belongs to the type-I 3-dehydroquinase family. It in the C-terminal section; belongs to the shikimate dehydrogenase family. Homodimer. The cofactor is Zn(2+).

Its subcellular location is the cytoplasm. The catalysed reaction is 7-phospho-2-dehydro-3-deoxy-D-arabino-heptonate = 3-dehydroquinate + phosphate. The enzyme catalyses 3-dehydroquinate = 3-dehydroshikimate + H2O. It carries out the reaction shikimate + NADP(+) = 3-dehydroshikimate + NADPH + H(+). It catalyses the reaction shikimate + ATP = 3-phosphoshikimate + ADP + H(+). The catalysed reaction is 3-phosphoshikimate + phosphoenolpyruvate = 5-O-(1-carboxyvinyl)-3-phosphoshikimate + phosphate. It participates in metabolic intermediate biosynthesis; chorismate biosynthesis; chorismate from D-erythrose 4-phosphate and phosphoenolpyruvate: step 2/7. It functions in the pathway metabolic intermediate biosynthesis; chorismate biosynthesis; chorismate from D-erythrose 4-phosphate and phosphoenolpyruvate: step 3/7. The protein operates within metabolic intermediate biosynthesis; chorismate biosynthesis; chorismate from D-erythrose 4-phosphate and phosphoenolpyruvate: step 4/7. Its pathway is metabolic intermediate biosynthesis; chorismate biosynthesis; chorismate from D-erythrose 4-phosphate and phosphoenolpyruvate: step 5/7. It participates in metabolic intermediate biosynthesis; chorismate biosynthesis; chorismate from D-erythrose 4-phosphate and phosphoenolpyruvate: step 6/7. The AROM polypeptide catalyzes 5 consecutive enzymatic reactions in prechorismate polyaromatic amino acid biosynthesis. This Penicillium rubens (strain ATCC 28089 / DSM 1075 / NRRL 1951 / Wisconsin 54-1255) (Penicillium chrysogenum) protein is Pentafunctional AROM polypeptide.